The primary structure comprises 194 residues: Glycerol-3-phosphate acyltransferase (194 aa).

The next 5 helical transmembrane spans lie at 4–24 (EIVL…LLLA), 78–98 (EIWV…TVFL), 110–130 (LGVF…IFVF), 137–157 (YVSL…ALIE), and 161–181 (LLIT…RENI).

It belongs to the PlsY family. As to quaternary structure, probably interacts with PlsX.

Its subcellular location is the cell inner membrane. It carries out the reaction an acyl phosphate + sn-glycerol 3-phosphate = a 1-acyl-sn-glycero-3-phosphate + phosphate. It participates in lipid metabolism; phospholipid metabolism. Functionally, catalyzes the transfer of an acyl group from acyl-phosphate (acyl-PO(4)) to glycerol-3-phosphate (G3P) to form lysophosphatidic acid (LPA). This enzyme utilizes acyl-phosphate as fatty acyl donor, but not acyl-CoA or acyl-ACP. The chain is Glycerol-3-phosphate acyltransferase from Geotalea daltonii (strain DSM 22248 / JCM 15807 / FRC-32) (Geobacter daltonii).